Here is a 101-residue protein sequence, read N- to C-terminus: Small ribosomal subunit protein eS24 (101 aa).

It belongs to the eukaryotic ribosomal protein eS24 family.

This Methanosarcina acetivorans (strain ATCC 35395 / DSM 2834 / JCM 12185 / C2A) protein is Small ribosomal subunit protein eS24.